The chain runs to 464 residues: Chitobiosyldiphosphodolichol beta-mannosyltransferase (464 aa).

Residues 1 to 2 lie on the Lumenal side of the membrane; it reads MA. A helical transmembrane segment spans residues 3–23; it reads ASCLVLLALCLLLPLLLLGGW. Over 24–99 the chain is Cytoplasmic; it reads KRWRRGRAAR…ELQSLAVGPR (76 aa). The segment at residues 100–120 is an intramembrane region (helical); that stretch reads VFQYGVKVVLQAMYLLWKLMW. Residues 121–464 are Cytoplasmic-facing; it reads REPGAYIFLQ…QTVLPLVMDT (344 aa). Ser242 bears the Phosphoserine mark. A disordered region spans residues 243–262; it reads PFRARSEPEDPVTERSAFTE.

It belongs to the glycosyltransferase group 1 family. Glycosyltransferase 33 subfamily.

Its subcellular location is the endoplasmic reticulum membrane. It catalyses the reaction an N,N'-diacetylchitobiosyl-diphospho-di-trans,poly-cis-dolichol + GDP-alpha-D-mannose = a beta-D-Man-(1-&gt;4)-beta-D-GlcNAc-(1-&gt;4)-alpha-D-GlcNAc-diphospho-di-trans,poly-cis-dolichol + GDP + H(+). It participates in protein modification; protein glycosylation. Its function is as follows. Mannosyltransferase that operates in the biosynthetic pathway of dolichol-linked oligosaccharides, the glycan precursors employed in protein asparagine (N)-glycosylation. The assembly of dolichol-linked oligosaccharides begins on the cytosolic side of the endoplasmic reticulum membrane and finishes in its lumen. The sequential addition of sugars to dolichol pyrophosphate produces dolichol-linked oligosaccharides containing fourteen sugars, including two GlcNAcs, nine mannoses and three glucoses. Once assembled, the oligosaccharide is transferred from the lipid to nascent proteins by oligosaccharyltransferases. Catalyzes, on the cytoplasmic face of the endoplasmic reticulum, the addition of the first mannose residues to the dolichol-linked oligosaccharide chain, to produce Man1GlcNAc(2)-PP-dolichol core oligosaccharide. Man1GlcNAc(2)-PP-dolichol is a substrate for ALG2, the following enzyme in the biosynthetic pathway. This chain is Chitobiosyldiphosphodolichol beta-mannosyltransferase, found in Homo sapiens (Human).